Here is a 357-residue protein sequence, read N- to C-terminus: MSETANSRTTERKQDHIEICLHGDVVFNGKTTGFERFAFEHAALPEISFSDIDLSTSFLGKSIGAPLMISSMTGGYSEAATLNQRLAEAAERFGIPLGVGSMRQALENRSYRESFAVVRKYAPTVQIFANIGAPEVAKGLTESEINTMLELLRADGLIVHLNAAQELFQPEGNTDFRHVLEQLALLSAKIPVPVLVKEVGCGISASAARQLIAAGVKAIDVAGAGGISWQKVEEIRYTRQFGQERRFSLQALDELLNWGIPTAQCLIDIGALKKESPGLNGIEIVASGGVGSGMDVAKSLALGAQLAASARALLKALHDGVLEETITSWLNDLRAVMFLTGTATIAELRHKTLITKP.

Position 12 to 13 (12 to 13) interacts with substrate; the sequence is RK. FMN is bound by residues Ser-70, 71–73, Ser-101, and Asn-130; that span reads SMT. 101–103 contacts substrate; that stretch reads SMR. Gln-165 contacts substrate. Position 166 (Glu-166) interacts with Mg(2+). FMN-binding positions include Lys-197 and 310–311; that span reads AR.

It belongs to the IPP isomerase type 2 family. As to quaternary structure, homooctamer. Dimer of tetramers. FMN is required as a cofactor. Requires NADPH as cofactor. It depends on Mg(2+) as a cofactor.

It is found in the cytoplasm. The enzyme catalyses isopentenyl diphosphate = dimethylallyl diphosphate. Its function is as follows. Involved in the biosynthesis of isoprenoids. Catalyzes the 1,3-allylic rearrangement of the homoallylic substrate isopentenyl (IPP) to its allylic isomer, dimethylallyl diphosphate (DMAPP). This chain is Isopentenyl-diphosphate delta-isomerase, found in Pelodictyon phaeoclathratiforme (strain DSM 5477 / BU-1).